The sequence spans 380 residues: Queuine tRNA-ribosyltransferase (380 aa).

The Proton acceptor role is filled by D96. Substrate is bound by residues 96-100 (DSGGF), D150, Q193, and G220. The segment at 251–257 (GVGAPDS) is RNA binding. The active-site Nucleophile is D270. An RNA binding; important for wobble base 34 recognition region spans residues 275–279 (TRIAR). Zn(2+)-binding residues include C308, C310, C313, and H339.

The protein belongs to the queuine tRNA-ribosyltransferase family. In terms of assembly, homodimer. Within each dimer, one monomer is responsible for RNA recognition and catalysis, while the other monomer binds to the replacement base PreQ1. It depends on Zn(2+) as a cofactor.

It catalyses the reaction 7-aminomethyl-7-carbaguanine + guanosine(34) in tRNA = 7-aminomethyl-7-carbaguanosine(34) in tRNA + guanine. Its pathway is tRNA modification; tRNA-queuosine biosynthesis. Catalyzes the base-exchange of a guanine (G) residue with the queuine precursor 7-aminomethyl-7-deazaguanine (PreQ1) at position 34 (anticodon wobble position) in tRNAs with GU(N) anticodons (tRNA-Asp, -Asn, -His and -Tyr). Catalysis occurs through a double-displacement mechanism. The nucleophile active site attacks the C1' of nucleotide 34 to detach the guanine base from the RNA, forming a covalent enzyme-RNA intermediate. The proton acceptor active site deprotonates the incoming PreQ1, allowing a nucleophilic attack on the C1' of the ribose to form the product. After dissociation, two additional enzymatic reactions on the tRNA convert PreQ1 to queuine (Q), resulting in the hypermodified nucleoside queuosine (7-(((4,5-cis-dihydroxy-2-cyclopenten-1-yl)amino)methyl)-7-deazaguanosine). The polypeptide is Queuine tRNA-ribosyltransferase (Streptococcus equi subsp. zooepidemicus (strain H70)).